A 311-amino-acid chain; its full sequence is 4-diphosphocytidyl-2-C-methyl-D-erythritol kinase (311 aa).

The active site involves Lys-16. 100–110 (PIGAGLAGGSS) lines the ATP pocket. Residue Asp-142 is part of the active site.

This sequence belongs to the GHMP kinase family. IspE subfamily.

The catalysed reaction is 4-CDP-2-C-methyl-D-erythritol + ATP = 4-CDP-2-C-methyl-D-erythritol 2-phosphate + ADP + H(+). Its pathway is isoprenoid biosynthesis; isopentenyl diphosphate biosynthesis via DXP pathway; isopentenyl diphosphate from 1-deoxy-D-xylulose 5-phosphate: step 3/6. Its function is as follows. Catalyzes the phosphorylation of the position 2 hydroxy group of 4-diphosphocytidyl-2C-methyl-D-erythritol. The chain is 4-diphosphocytidyl-2-C-methyl-D-erythritol kinase from Prochlorococcus marinus (strain AS9601).